The chain runs to 64 residues: DNA-directed RNA polymerase subunit Rpo10 (64 aa).

Zn(2+) contacts are provided by cysteine 7, cysteine 10, cysteine 45, and cysteine 46.

It belongs to the archaeal Rpo10/eukaryotic RPB10 RNA polymerase subunit family. In terms of assembly, part of the RNA polymerase complex. Zn(2+) is required as a cofactor.

The protein localises to the cytoplasm. It catalyses the reaction RNA(n) + a ribonucleoside 5'-triphosphate = RNA(n+1) + diphosphate. Its function is as follows. DNA-dependent RNA polymerase (RNAP) catalyzes the transcription of DNA into RNA using the four ribonucleoside triphosphates as substrates. The sequence is that of DNA-directed RNA polymerase subunit Rpo10 from Haloquadratum walsbyi (strain DSM 16790 / HBSQ001).